The primary structure comprises 436 residues: Trigger factor (436 aa).

The region spanning 163–248 (GDRVTVDFEG…LKKIEAAHLP (86 aa)) is the PPIase FKBP-type domain.

This sequence belongs to the FKBP-type PPIase family. Tig subfamily.

Its subcellular location is the cytoplasm. It catalyses the reaction [protein]-peptidylproline (omega=180) = [protein]-peptidylproline (omega=0). Its function is as follows. Involved in protein export. Acts as a chaperone by maintaining the newly synthesized protein in an open conformation. Functions as a peptidyl-prolyl cis-trans isomerase. The polypeptide is Trigger factor (Albidiferax ferrireducens (strain ATCC BAA-621 / DSM 15236 / T118) (Rhodoferax ferrireducens)).